Reading from the N-terminus, the 213-residue chain is Orotate phosphoribosyltransferase (213 aa).

Lys-26 contacts 5-phospho-alpha-D-ribose 1-diphosphate. 34–35 lines the orotate pocket; it reads FF. 5-phospho-alpha-D-ribose 1-diphosphate is bound by residues 72–73, Arg-99, Lys-100, Lys-103, His-105, and 124–132; these read YK and DDVITAGTA. Orotate is bound by residues Thr-128 and Arg-156.

The protein belongs to the purine/pyrimidine phosphoribosyltransferase family. PyrE subfamily. As to quaternary structure, homodimer. Mg(2+) serves as cofactor.

It carries out the reaction orotidine 5'-phosphate + diphosphate = orotate + 5-phospho-alpha-D-ribose 1-diphosphate. The protein operates within pyrimidine metabolism; UMP biosynthesis via de novo pathway; UMP from orotate: step 1/2. Functionally, catalyzes the transfer of a ribosyl phosphate group from 5-phosphoribose 1-diphosphate to orotate, leading to the formation of orotidine monophosphate (OMP). The chain is Orotate phosphoribosyltransferase from Pseudomonas savastanoi pv. phaseolicola (strain 1448A / Race 6) (Pseudomonas syringae pv. phaseolicola (strain 1448A / Race 6)).